Consider the following 72-residue polypeptide: Translation initiation factor IF-1 (72 aa).

The S1-like domain occupies Met-1–Arg-72.

This sequence belongs to the IF-1 family. In terms of assembly, component of the 30S ribosomal translation pre-initiation complex which assembles on the 30S ribosome in the order IF-2 and IF-3, IF-1 and N-formylmethionyl-tRNA(fMet); mRNA recruitment can occur at any time during PIC assembly.

It is found in the cytoplasm. Functionally, one of the essential components for the initiation of protein synthesis. Stabilizes the binding of IF-2 and IF-3 on the 30S subunit to which N-formylmethionyl-tRNA(fMet) subsequently binds. Helps modulate mRNA selection, yielding the 30S pre-initiation complex (PIC). Upon addition of the 50S ribosomal subunit IF-1, IF-2 and IF-3 are released leaving the mature 70S translation initiation complex. The polypeptide is Translation initiation factor IF-1 (Treponema denticola (strain ATCC 35405 / DSM 14222 / CIP 103919 / JCM 8153 / KCTC 15104)).